The chain runs to 147 residues: HTH-type transcriptional regulator HmrR (147 aa).

The HTH merR-type domain maps to 1-69; it reads MNIGEASKVS…VEQIKELLAL (69 aa). The segment at residues 4-23 is a DNA-binding region (H-T-H motif); sequence GEASKVSGVSSKMIRYYEQI.

In terms of assembly, homodimer.

It is found in the cytoplasm. Its function is as follows. Regulates the transcription of actP. It detects cytoplasmic copper stress and activates transcription in response to increasing copper concentrations. In the absence of copper, it negatively regulates the transcription of actP. This is HTH-type transcriptional regulator HmrR (hmrR) from Sinorhizobium medicae (strain WSM419) (Ensifer medicae).